A 255-amino-acid chain; its full sequence is Small ribosomal subunit protein uS2 (255 aa).

Positions 232–255 (ASGRDLGASEEVPVEPALEEASEA) are disordered.

The protein belongs to the universal ribosomal protein uS2 family.

The protein is Small ribosomal subunit protein uS2 of Sinorhizobium medicae (strain WSM419) (Ensifer medicae).